The following is a 582-amino-acid chain: Aspartate--tRNA ligase (582 aa).

E174 is an L-aspartate binding site. The tract at residues 198–201 (QITK) is aspartate. R220 lines the L-aspartate pocket. ATP-binding positions include 220 to 222 (RDE) and Q229. H443 lines the L-aspartate pocket. E477 contributes to the ATP binding site. R484 is an L-aspartate binding site. 529 to 532 (GLDR) serves as a coordination point for ATP.

The protein belongs to the class-II aminoacyl-tRNA synthetase family. Type 1 subfamily. As to quaternary structure, homodimer.

Its subcellular location is the cytoplasm. The catalysed reaction is tRNA(Asp) + L-aspartate + ATP = L-aspartyl-tRNA(Asp) + AMP + diphosphate. Catalyzes the attachment of L-aspartate to tRNA(Asp) in a two-step reaction: L-aspartate is first activated by ATP to form Asp-AMP and then transferred to the acceptor end of tRNA(Asp). The chain is Aspartate--tRNA ligase from Streptococcus equi subsp. zooepidemicus (strain MGCS10565).